A 61-amino-acid chain; its full sequence is Calprismin (61 aa).

Glycosylated. Expressed by the calcifying mantle epithelium and incorporated into the shell's calcitic prismatic layer.

In Pinna nobilis (Noble pen shell), this protein is Calprismin.